Consider the following 134-residue polypeptide: MDSRTGELITAAQAMNGVFIWEVPNPLYFKIIQHDNRPFVMNQDIITVQIRFNHNLRKALGLHQCWMDFKVWTTLQPQTWRFLRVFKTQVLKYLDSLGVISINTIVKAVEHVLYNVIHGTDRVEQSNLIKLNIY.

It belongs to the geminiviridae replication enhancer protein family. In terms of assembly, homooligomer. Interacts with the replication-associated protein (REP). Interacts with host proliferating cell nuclear antigen (PCNA). Interacts with host retinoblastoma-related protein 1 (RBR1), and may thereby deregulate the host cell cycle. Oligomerization and interaction with PCNA are necessary for optimal replication enhancement.

Increases viral DNA accumulation. Enhances infectivity and symptom expression. The sequence is that of Replication enhancer protein from Manihot esculenta (Cassava).